The primary structure comprises 248 residues: MSPNPANPTDLERVATAKILNPASRSQVTQDLSENVILTTVDDLYNWAKLSSLWPLLYGTACCFIEFAALIGSRFDFDRFGLVPRSSPRQADLIITAGTITMKMAPALVRLYEEMPEPKYVIAMGACTITGGMFSSDSTTAVRGVDKLIPVDVYIPGCPPRPEAIFDAIIKLRKKVANESIQERAITQQTHRYYSTSHQMKVVAPILDGKYLQQGTRSAPPRELQEAMGMPVPPALTTSQQKEQLNRG.

Residues 1-2 constitute a propeptide that is removed on maturation; it reads MS. Residues Cys-62, Cys-63, Cys-127, and Cys-158 each coordinate [4Fe-4S] cluster. The disordered stretch occupies residues 228-248; the sequence is MGMPVPPALTTSQQKEQLNRG. The segment covering 236 to 248 has biased composition (polar residues); sequence LTTSQQKEQLNRG.

This sequence belongs to the complex I 20 kDa subunit family. As to quaternary structure, NDH-1 can be composed of about 15 different subunits; different subcomplexes with different compositions have been identified which probably have different functions. [4Fe-4S] cluster serves as cofactor.

The protein resides in the cellular thylakoid membrane. It carries out the reaction a plastoquinone + NADH + (n+1) H(+)(in) = a plastoquinol + NAD(+) + n H(+)(out). The catalysed reaction is a plastoquinone + NADPH + (n+1) H(+)(in) = a plastoquinol + NADP(+) + n H(+)(out). In terms of biological role, NDH-1 shuttles electrons from an unknown electron donor, via FMN and iron-sulfur (Fe-S) centers, to quinones in the respiratory and/or the photosynthetic chain. The immediate electron acceptor for the enzyme in this species is believed to be plastoquinone. Couples the redox reaction to proton translocation, and thus conserves the redox energy in a proton gradient. Cyanobacterial NDH-1 also plays a role in inorganic carbon-concentration. The protein is NAD(P)H-quinone oxidoreductase subunit K 1 of Synechocystis sp. (strain ATCC 27184 / PCC 6803 / Kazusa).